Consider the following 838-residue polypeptide: E3 ubiquitin-protein ligase RNF19A (838 aa).

Positions 128-351 (DFIECPLCLL…LSPSGCTFWG (224 aa)) are TRIAD supradomain. Residues Cys-132, Cys-135, Cys-150, His-152, Cys-155, Cys-158, Cys-176, Cys-179, Cys-219, Cys-224, Cys-241, Cys-246, Cys-251, Cys-254, His-259, Cys-264, Cys-301, and Cys-304 each contribute to the Zn(2+) site. The RING-type 1 zinc finger occupies 132 to 179 (CPLCLLRHSKDRFPEIMTCHHRSCVDCLRQYLRIEISESRVNISCPEC). The IBR-type zinc finger occupies 199–264 (EKYEEFMLRR…KQIWHPNQTC (66 aa)). The RING-type 2; atypical zinc-finger motif lies at 301-332 (CPRCAAYIIKMNDGSCNHMTCAVCGCEFCWLC). Residue Cys-316 is part of the active site. Positions 321, 324, 329, 332, 340, and 347 each coordinate Zn(2+). A run of 2 helical transmembrane segments spans residues 368-388 (LVGAPVGIALIAGIAIPAMII) and 424-444 (VIVSPVVAAVTVGIGVPIMLA). Disordered regions lie at residues 622-685 (SKPS…SNMK) and 700-721 (QQSTNSSEFEAPSLSDSMPSVA). Position 631 is a phosphoserine (Ser-631). Residues 631-644 (SGSSSVDDGSAARS) show a composition bias toward low complexity. The tract at residues 660–838 (ATKWSKEATA…ELKVAIQTDI (179 aa)) is interaction with CASR. The span at 671–683 (KKSKSGKLRKKSN) shows a compositional bias: basic residues. Residues 700–717 (QQSTNSSEFEAPSLSDSM) show a composition bias toward polar residues.

It belongs to the RBR family. RNF19 subfamily. Interacts with UBE2L3 and UBE2L6. Also interacts with transcription factor Sp1. Interacts with SNCAIP, CASR and VCP.

Its subcellular location is the membrane. It localises to the cytoplasm. The protein resides in the cytoskeleton. It is found in the microtubule organizing center. The protein localises to the centrosome. It carries out the reaction [E2 ubiquitin-conjugating enzyme]-S-ubiquitinyl-L-cysteine + [acceptor protein]-L-lysine = [E2 ubiquitin-conjugating enzyme]-L-cysteine + [acceptor protein]-N(6)-ubiquitinyl-L-lysine.. Its pathway is protein modification; protein ubiquitination. Functionally, E3 ubiquitin-protein ligase which accepts ubiquitin from E2 ubiquitin-conjugating enzymes UBE2L3 and UBE2L6 in the form of a thioester and then directly transfers the ubiquitin to targeted substrates, such as SNCAIP or CASR. The chain is E3 ubiquitin-protein ligase RNF19A (RNF19A) from Sus scrofa (Pig).